The chain runs to 233 residues: UPF0758 protein SRU_2338 (233 aa).

In terms of domain architecture, MPN spans 110–232; the sequence is QVTCPADVAD…HTSLAERGVI (123 aa). Positions 181, 183, and 194 each coordinate Zn(2+). Positions 181-194 match the JAMM motif motif; the sequence is HNHPSGNPEPSRED.

This sequence belongs to the UPF0758 family.

This is UPF0758 protein SRU_2338 from Salinibacter ruber (strain DSM 13855 / M31).